Here is an 843-residue protein sequence, read N- to C-terminus: Protein translocase subunit SecA 1 (843 aa).

ATP is bound by residues Q91, 109-113 (GEGKT), and D498. A compositionally biased stretch (basic and acidic residues) spans 799 to 813 (EAKHVSAEDGKEKVK). Positions 799 to 826 (EAKHVSAEDGKEKVKPKPIVKGDQVGRN) are disordered. Residues C829, C831, C840, and H841 each coordinate Zn(2+).

It belongs to the SecA family. In terms of assembly, monomer and homodimer. Part of the essential Sec protein translocation apparatus which comprises SecA, SecYEG and auxiliary proteins SecDF. Other proteins may also be involved. Requires Zn(2+) as cofactor.

Its subcellular location is the cell membrane. It is found in the cytoplasm. It catalyses the reaction ATP + H2O + cellular proteinSide 1 = ADP + phosphate + cellular proteinSide 2.. In terms of biological role, part of the Sec protein translocase complex. Interacts with the SecYEG preprotein conducting channel. Has a central role in coupling the hydrolysis of ATP to the transfer of proteins into and across the cell membrane, serving as an ATP-driven molecular motor driving the stepwise translocation of polypeptide chains across the membrane. This chain is Protein translocase subunit SecA 1, found in Staphylococcus aureus (strain N315).